A 446-amino-acid chain; its full sequence is Butyryl-CoA:acetate CoA-transferase (446 aa).

Residue 220–224 (GIGGM) participates in CoA binding. The active-site 5-glutamyl coenzyme A thioester intermediate is Glu245. Positions 320, 343, and 370 each coordinate CoA.

This sequence belongs to the acetyl-CoA hydrolase/transferase family. Butyryl-CoA CoA-transferase subfamily.

It carries out the reaction butanoate + acetyl-CoA = butanoyl-CoA + acetate. The catalysed reaction is propanoate + acetyl-CoA = propanoyl-CoA + acetate. It functions in the pathway lipid metabolism; butanoate metabolism. Functionally, coenzyme A-transferase that converts butyryl-CoA to butyrate. Can also use proprionyl-CoA as substrate in vitro. The protein is Butyryl-CoA:acetate CoA-transferase of Anaerostipes caccae (strain DSM 14662 / CCUG 47493 / JCM 13470 / NCIMB 13811 / L1-92).